A 224-amino-acid polypeptide reads, in one-letter code: uncharacterized protein (224 aa).

Residues His57, His59, Asp61, His62, His138, Asp162, and His203 each coordinate Zn(2+).

The protein belongs to the metallo-beta-lactamase superfamily. Glyoxalase II family. It depends on Zn(2+) as a cofactor.

This is an uncharacterized protein from Mycobacterium tuberculosis (strain CDC 1551 / Oshkosh).